The following is a 401-amino-acid chain: Enolase (401 aa).

Gln-154 is a (2R)-2-phosphoglycerate binding site. The active-site Proton donor is the Glu-196. Residues Asp-232, Glu-275, and Asp-302 each coordinate Mg(2+). The (2R)-2-phosphoglycerate site is built by Lys-327, Arg-356, Ser-357, and Lys-378. Lys-327 functions as the Proton acceptor in the catalytic mechanism.

The protein belongs to the enolase family. Mg(2+) serves as cofactor.

The protein localises to the cytoplasm. The protein resides in the secreted. Its subcellular location is the cell surface. The catalysed reaction is (2R)-2-phosphoglycerate = phosphoenolpyruvate + H2O. The protein operates within carbohydrate degradation; glycolysis; pyruvate from D-glyceraldehyde 3-phosphate: step 4/5. Its function is as follows. Catalyzes the reversible conversion of 2-phosphoglycerate (2-PG) into phosphoenolpyruvate (PEP). It is essential for the degradation of carbohydrates via glycolysis. The protein is Enolase of Haloquadratum walsbyi (strain DSM 16790 / HBSQ001).